We begin with the raw amino-acid sequence, 324 residues long: Glyoxylate/hydroxypyruvate reductase B (324 aa).

Catalysis depends on residues Arg237 and Glu266. His285 (proton donor) is an active-site residue.

It belongs to the D-isomer specific 2-hydroxyacid dehydrogenase family. GhrB subfamily. In terms of assembly, homodimer.

It localises to the cytoplasm. It catalyses the reaction glycolate + NADP(+) = glyoxylate + NADPH + H(+). It carries out the reaction (R)-glycerate + NAD(+) = 3-hydroxypyruvate + NADH + H(+). The catalysed reaction is (R)-glycerate + NADP(+) = 3-hydroxypyruvate + NADPH + H(+). In terms of biological role, catalyzes the NADPH-dependent reduction of glyoxylate and hydroxypyruvate into glycolate and glycerate, respectively. The protein is Glyoxylate/hydroxypyruvate reductase B of Salmonella typhi.